The primary structure comprises 326 residues: Beta-ketoacyl-[acyl-carrier-protein] synthase III (326 aa).

Active-site residues include C120 and H253. Residues 254-258 (QANIR) are ACP-binding. Residue N283 is part of the active site.

This sequence belongs to the thiolase-like superfamily. FabH family. Homodimer.

The protein resides in the cytoplasm. The catalysed reaction is malonyl-[ACP] + acetyl-CoA + H(+) = 3-oxobutanoyl-[ACP] + CO2 + CoA. It participates in lipid metabolism; fatty acid biosynthesis. Its function is as follows. Catalyzes the condensation reaction of fatty acid synthesis by the addition to an acyl acceptor of two carbons from malonyl-ACP. Catalyzes the first condensation reaction which initiates fatty acid synthesis and may therefore play a role in governing the total rate of fatty acid production. Possesses both acetoacetyl-ACP synthase and acetyl transacylase activities. Its substrate specificity determines the biosynthesis of branched-chain and/or straight-chain of fatty acids. In Ralstonia nicotianae (strain ATCC BAA-1114 / GMI1000) (Ralstonia solanacearum), this protein is Beta-ketoacyl-[acyl-carrier-protein] synthase III.